The primary structure comprises 444 residues: Signal recognition particle 54 kDa protein (444 aa).

Residues 102 to 109 (GVQGSGKT), 184 to 188 (DTAGR), and 244 to 247 (SKMD) each bind GTP.

Belongs to the GTP-binding SRP family. SRP54 subfamily. Part of the signal recognition particle protein translocation system, which is composed of SRP and FtsY. Archaeal SRP consists of a 7S RNA molecule of 300 nucleotides and two protein subunits: SRP54 and SRP19.

It localises to the cytoplasm. It carries out the reaction GTP + H2O = GDP + phosphate + H(+). Functionally, involved in targeting and insertion of nascent membrane proteins into the cytoplasmic membrane. Binds to the hydrophobic signal sequence of the ribosome-nascent chain (RNC) as it emerges from the ribosomes. The SRP-RNC complex is then targeted to the cytoplasmic membrane where it interacts with the SRP receptor FtsY. The sequence is that of Signal recognition particle 54 kDa protein from Sulfolobus acidocaldarius (strain ATCC 33909 / DSM 639 / JCM 8929 / NBRC 15157 / NCIMB 11770).